The sequence spans 173 residues: Bifunctional protein PyrR (173 aa).

Positions 93–105 match the PRPP-binding motif; that stretch reads IILVDDVLYTGRT.

Belongs to the purine/pyrimidine phosphoribosyltransferase family. PyrR subfamily. Homodimer and homohexamer; in equilibrium.

It carries out the reaction UMP + diphosphate = 5-phospho-alpha-D-ribose 1-diphosphate + uracil. In terms of biological role, regulates transcriptional attenuation of the pyrimidine nucleotide (pyr) operon by binding in a uridine-dependent manner to specific sites on pyr mRNA. This disrupts an antiterminator hairpin in the RNA and favors formation of a downstream transcription terminator, leading to a reduced expression of downstream genes. Also displays a weak uracil phosphoribosyltransferase activity which is not physiologically significant. The chain is Bifunctional protein PyrR from Streptococcus equi subsp. zooepidemicus (strain H70).